The following is an 89-amino-acid chain: Mitochondrial import inner membrane translocase subunit Tim9 (89 aa).

N-acetylalanine is present on A2. Residues 28–52 (CFLDCVKDFTTREVKPEETTCSEHC) carry the Twin CX3C motif motif. 2 disulfides stabilise this stretch: C28–C52 and C32–C48.

The protein belongs to the small Tim family. Heterohexamer; composed of 3 copies of TIMM9 and 3 copies of TIMM10/TIM10A, named soluble 70 kDa complex. The complex forms a 6-bladed alpha-propeller structure and associates with the TIMM22 component of the TIM22 complex. Interacts with multi-pass transmembrane proteins in transit. Also forms a complex composed of TIMM9, TIMM10/TIM10A and FXC1/TIM10B. In terms of tissue distribution, ubiquitous, with highest expression in heart, kidney, liver and skeletal muscle.

It is found in the mitochondrion inner membrane. In terms of biological role, mitochondrial intermembrane chaperone that participates in the import and insertion of multi-pass transmembrane proteins into the mitochondrial inner membrane. May also be required for the transfer of beta-barrel precursors from the TOM complex to the sorting and assembly machinery (SAM complex) of the outer membrane. Acts as a chaperone-like protein that protects the hydrophobic precursors from aggregation and guide them through the mitochondrial intermembrane space. This Homo sapiens (Human) protein is Mitochondrial import inner membrane translocase subunit Tim9 (TIMM9).